The sequence spans 1792 residues: Non-reducing polyketide synthase aptA (1792 aa).

Positions 1-395 are N-terminal acylcarrier protein transacylase domain (SAT); it reads MKDNTHSTTL…PRSFAHSKLA (395 aa). A Ketosynthase family 3 (KS3) domain is found at 391–824; that stretch reads HSKLAVVGMA…GGNTTVLLED (434 aa). Residues cysteine 564, histidine 699, and histidine 742 each act as for beta-ketoacyl synthase activity in the active site. The malonyl-CoA:ACP transacylase (MAT) domain stretch occupies residues 926 to 1243; that stretch reads VFAFTGQGAF…NLVALHLAGC (318 aa). The interval 1308 to 1625 is product template (PT) domain; the sequence is TSLIHEIIEE…PRLLMDRFFS (318 aa). Residues 1312 to 1447 form an N-terminal hotdog fold region; the sequence is HEIIEETIGE…GSVRFEADAE (136 aa). Residues 1312–1621 form the PKS/mFAS DH domain; that stretch reads HEIIEETIGE…FRRVPRLLMD (310 aa). The active-site Proton acceptor; for dehydratase activity is histidine 1344. Residues 1475 to 1621 form a C-terminal hotdog fold region; it reads QASQLSKALS…FRRVPRLLMD (147 aa). The active-site Proton donor; for dehydratase activity is aspartate 1533. Residues 1634–1649 are compositionally biased toward low complexity; the sequence is VAASASSAPKTATKHA. The interval 1634–1716 is disordered; it reads VAASASSAPK…GPNGTTSQPE (83 aa). Residues 1664 to 1684 show a composition bias toward polar residues; it reads TPSSLPTVQAQNTSPPQQVTP. A compositionally biased stretch (basic and acidic residues) spans 1694 to 1705; sequence TPEEEKPGKADA. In terms of domain architecture, Carrier spans 1715–1792; sequence PEATGVVGQC…DMMDWLEQYC (78 aa). An O-(pantetheine 4'-phosphoryl)serine modification is found at serine 1752.

Pantetheine 4'-phosphate is required as a cofactor.

The enzyme catalyses holo-[ACP] + 8 malonyl-CoA + acetyl-CoA + 8 H(+) = 3,6,8,9-tetrahydroxy-1-oxo-3-(2-oxopropyl)-1,2,3,4-tetrahydroanthracene-2-carboxyl-[ACP] + 8 CO2 + 9 CoA + 2 H2O. It participates in secondary metabolite biosynthesis. Functionally, non-reducing polyketide synthase (NRPKS); part of the gene cluster that mediates the biosynthesis of asperthecin, an anthraquinone pigment. Catalyzes the formation of the aromatic polyketide from acetyl coenzyme A and seven malonyl coenzyme A molecules. Through its product template (PT) domain, catalyzes the cyclization of the polyketide backbone via C6-C11 aldolcondensation. Polyketide is subsequently hydrolyzed from the NRPKS by the action of the hydrolase aptB into endocrocin-9-anthrone. Endocrocin-9-anthrone is then oxidized into endocrocin by aptC. Endocrocin is likely to decarboxylate spontaneously to form emodin which explains why there is no decarboxylase in the asperthecin biosynthesis cluster. Finally, aptC or another endogenous oxygenase catalyzes additional oxidation steps to form asperthecin. This chain is Non-reducing polyketide synthase aptA, found in Emericella nidulans (strain FGSC A4 / ATCC 38163 / CBS 112.46 / NRRL 194 / M139) (Aspergillus nidulans).